The chain runs to 258 residues: Chymotrypsin-like elastase family member 1 (258 aa).

An N-terminal signal peptide occupies residues 1–8 (MLVLYGHS). The propeptide at 9-18 (TQDLPETNAR) is activation peptide. A Peptidase S1 domain is found at 19–256 (VVGGTEAGRN…YISWINNVIA (238 aa)). Cys-48 and Cys-64 form a disulfide bridge. Residue His-63 is the Charge relay system of the active site. Residues Asp-77, Asn-79, Gln-82, and Glu-87 each contribute to the Ca(2+) site. A glycan (N-linked (GlcNAc...) asparagine) is linked at Asn-79. Asp-111 functions as the Charge relay system in the catalytic mechanism. 3 disulfide bridges follow: Cys-145–Cys-212, Cys-176–Cys-192, and Cys-202–Cys-232. The Charge relay system role is filled by Ser-206. Asn-233 carries N-linked (GlcNAc...) asparagine glycosylation.

It belongs to the peptidase S1 family. Elastase subfamily. Requires Ca(2+) as cofactor. Basal layers of epidermis (at protein level). Not expressed in the pancreas.

The protein resides in the secreted. The enzyme catalyses Hydrolysis of proteins, including elastin. Preferential cleavage: Ala-|-Xaa.. Its function is as follows. Serine proteases that hydrolyze many proteins in addition to elastin. This chain is Chymotrypsin-like elastase family member 1 (CELA1), found in Homo sapiens (Human).